The following is a 155-amino-acid chain: Small ribosomal subunit protein uS9 (155 aa).

This sequence belongs to the universal ribosomal protein uS9 family.

The protein is Small ribosomal subunit protein uS9 of Rhizobium etli (strain CIAT 652).